The following is a 346-amino-acid chain: Nitrilase 1 (346 aa).

Serine 2 carries the N-acetylserine modification. In terms of domain architecture, CN hydrolase spans 25–297 (VRVTIVQSST…EGLVTADIDL (273 aa)). The active-site Proton acceptor is the glutamate 65. The active-site Proton donor is lysine 152. The Nucleophile role is filled by cysteine 186.

It belongs to the carbon-nitrogen hydrolase superfamily. Nitrilase family. In terms of assembly, interacts with DEK3. As to expression, expressed in cotyledons, hypocotyls, leaves, roots, stems, flowers and siliques.

It carries out the reaction a nitrile + 2 H2O = a carboxylate + NH4(+). Functionally, can convert indole-3-acetonitrile to the plant hormone indole-3-acetic acid. This chain is Nitrilase 1, found in Arabidopsis thaliana (Mouse-ear cress).